We begin with the raw amino-acid sequence, 319 residues long: tRNA uridine(34) hydroxylase (319 aa).

Positions 124–218 (LDEDTVILDA…YGKNEETKGE (95 aa)) constitute a Rhodanese domain. Cysteine 178 serves as the catalytic Cysteine persulfide intermediate.

It belongs to the TrhO family.

It catalyses the reaction uridine(34) in tRNA + AH2 + O2 = 5-hydroxyuridine(34) in tRNA + A + H2O. In terms of biological role, catalyzes oxygen-dependent 5-hydroxyuridine (ho5U) modification at position 34 in tRNAs. This is tRNA uridine(34) hydroxylase from Listeria welshimeri serovar 6b (strain ATCC 35897 / DSM 20650 / CCUG 15529 / CIP 8149 / NCTC 11857 / SLCC 5334 / V8).